The chain runs to 373 residues: UDP-N-acetylglucosamine--N-acetylmuramyl-(pentapeptide) pyrophosphoryl-undecaprenol N-acetylglucosamine transferase (373 aa).

Residues 14-16 (TAG), Asn128, Arg165, Ser199, and Gln295 contribute to the UDP-N-acetyl-alpha-D-glucosamine site.

This sequence belongs to the glycosyltransferase 28 family. MurG subfamily.

Its subcellular location is the cell membrane. The catalysed reaction is di-trans,octa-cis-undecaprenyl diphospho-N-acetyl-alpha-D-muramoyl-L-alanyl-D-glutamyl-meso-2,6-diaminopimeloyl-D-alanyl-D-alanine + UDP-N-acetyl-alpha-D-glucosamine = di-trans,octa-cis-undecaprenyl diphospho-[N-acetyl-alpha-D-glucosaminyl-(1-&gt;4)]-N-acetyl-alpha-D-muramoyl-L-alanyl-D-glutamyl-meso-2,6-diaminopimeloyl-D-alanyl-D-alanine + UDP + H(+). The protein operates within cell wall biogenesis; peptidoglycan biosynthesis. Cell wall formation. Catalyzes the transfer of a GlcNAc subunit on undecaprenyl-pyrophosphoryl-MurNAc-pentapeptide (lipid intermediate I) to form undecaprenyl-pyrophosphoryl-MurNAc-(pentapeptide)GlcNAc (lipid intermediate II). The protein is UDP-N-acetylglucosamine--N-acetylmuramyl-(pentapeptide) pyrophosphoryl-undecaprenol N-acetylglucosamine transferase of Mycobacterium sp. (strain KMS).